The primary structure comprises 634 residues: TATA box-binding protein-associated factor RNA polymerase I subunit B (634 aa).

Residues 19 to 51 (LVCEYCGHGSEYAEDDADNGFFTCRQCSAIHTS) form an RRN7-type zinc finger. Zn(2+) contacts are provided by Cys21, Cys24, Cys42, and Cys45. The interval 51–80 (STQNTATNPFDFPMTPAHLSAHRRPTQPTP) is B-reader. A disordered region spans residues 56-117 (ATNPFDFPMT…EPRDFATGAN (62 aa)). Positions 77–87 (QPTPTPKPFPA) are enriched in pro residues. The B-linker stretch occupies residues 81–83 (TPK). The tract at residues 84–281 (PFPAPRGAAT…DKLLGSSLND (198 aa)) is N-terminal cyclin fold. A compositionally biased stretch (low complexity) spans 88-98 (PRGAATGAAAP). The segment at 282–284 (CPL) is C-terminal cyclin fold.

Belongs to the RRN7/TAF1B family.

Its subcellular location is the nucleus. It is found in the nucleolus. Functionally, component of RNA polymerase I core factor complex that acts as a GTF2B/TFIIB-like factor and plays a key role in multiple steps during transcription initiation such as pre-initiation complex (PIC) assembly and postpolymerase recruitment events in polymerase I (Pol I) transcription. Binds rDNA promoters and plays a role in Pol I recruitment. The protein is TATA box-binding protein-associated factor RNA polymerase I subunit B of Oryza sativa subsp. indica (Rice).